Here is a 252-residue protein sequence, read N- to C-terminus: Enolase-phosphatase E1 (252 aa).

Mg(2+)-binding residues include Asp14 and Glu16. Substrate-binding positions include 143–144 (SS) and Lys177. Asp202 is a binding site for Mg(2+).

This sequence belongs to the HAD-like hydrolase superfamily. MasA/MtnC family. In terms of assembly, monomer. Requires Mg(2+) as cofactor.

It is found in the cytoplasm. The protein localises to the nucleus. It catalyses the reaction 5-methylsulfanyl-2,3-dioxopentyl phosphate + H2O = 1,2-dihydroxy-5-(methylsulfanyl)pent-1-en-3-one + phosphate. The protein operates within amino-acid biosynthesis; L-methionine biosynthesis via salvage pathway; L-methionine from S-methyl-5-thio-alpha-D-ribose 1-phosphate: step 3/6. It participates in amino-acid biosynthesis; L-methionine biosynthesis via salvage pathway; L-methionine from S-methyl-5-thio-alpha-D-ribose 1-phosphate: step 4/6. Bifunctional enzyme that catalyzes the enolization of 2,3-diketo-5-methylthiopentyl-1-phosphate (DK-MTP-1-P) into the intermediate 2-hydroxy-3-keto-5-methylthiopentenyl-1-phosphate (HK-MTPenyl-1-P), which is then dephosphorylated to form the acireductone 1,2-dihydroxy-3-keto-5-methylthiopentene (DHK-MTPene). The protein is Enolase-phosphatase E1 of Drosophila persimilis (Fruit fly).